Consider the following 507-residue polypeptide: ATP synthase subunit alpha, chloroplastic (507 aa).

An ATP-binding site is contributed by 170–177 (GDRQTGKT).

It belongs to the ATPase alpha/beta chains family. In terms of assembly, F-type ATPases have 2 components, CF(1) - the catalytic core - and CF(0) - the membrane proton channel. CF(1) has five subunits: alpha(3), beta(3), gamma(1), delta(1), epsilon(1). CF(0) has four main subunits: a, b, b' and c.

Its subcellular location is the plastid. It localises to the chloroplast thylakoid membrane. It catalyses the reaction ATP + H2O + 4 H(+)(in) = ADP + phosphate + 5 H(+)(out). Produces ATP from ADP in the presence of a proton gradient across the membrane. The alpha chain is a regulatory subunit. In Phalaenopsis aphrodite subsp. formosana (Moth orchid), this protein is ATP synthase subunit alpha, chloroplastic.